The primary structure comprises 377 residues: MSLVRLAHELPIEAPRTAWLDSIIKGDCVSALERLPDHSVDVIFADPPYNLQLGGDLHRPDQSMVSAVDDHWDQFESFQAYDAFTRAWLLACRRVLKPNGTIWVIGSYHNIFRVGTQLQDLGFWLLNDIVWRKTNPMPNFRGRRFQNAHETLIWASREQKGKGYTFNYEAMKAANDDVQMRSDWLFPICTGSERLKDENGDKVHPTQKPEALLARIMMASSKPGDVILDPFFGSGTTGAVAKRLGRHFVGIEREQPYIDAATARINAVEPLGKAELTVMTGKRAEPRVAFTSVMEAGLLRPGTVLCDERRRFAAIVRADGTLTANGEAGSIHRIGARVQGFDACNGWTFWHFEENGVLKPIDALRKIIREQMAAAGA.

Positions Leu271–Ala373 constitute an RAMA domain.

It belongs to the N(4)/N(6)-methyltransferase family.

It carries out the reaction a 2'-deoxyadenosine in DNA + S-adenosyl-L-methionine = an N(6)-methyl-2'-deoxyadenosine in DNA + S-adenosyl-L-homocysteine + H(+). In terms of biological role, a beta subtype methylase that recognizes the double-stranded sequence 5'-GANTC-3' and methylates on A-2 on both strands. Overexpression from a moderate-copy number plasmid (10-12 copies/cell) leads to enlarged, branched cells, many with 3-5 genome equivalents. Contributes to the accurate cell-cycle control of DNA replication and cellular morphology. This chain is DNA methyltransferase CcrM, found in Brucella abortus (strain 2308).